A 104-amino-acid chain; its full sequence is ATP-dependent Clp protease adapter protein ClpS (104 aa).

The segment at 1–20 (MSPDPHEDLGDVLTEPTQKT) is disordered.

It belongs to the ClpS family. Binds to the N-terminal domain of the chaperone ClpA.

Functionally, involved in the modulation of the specificity of the ClpAP-mediated ATP-dependent protein degradation. This chain is ATP-dependent Clp protease adapter protein ClpS, found in Desulfatibacillum aliphaticivorans.